The primary structure comprises 464 residues: 26S proteasome regulatory subunit 7 homolog B (464 aa).

246 to 253 (GPPGSGKT) serves as a coordination point for ATP. Lysine 452 participates in a covalent cross-link: Glycyl lysine isopeptide (Lys-Gly) (interchain with G-Cter in ubiquitin).

Belongs to the AAA ATPase family. Component of the 19S regulatory particle (RP/PA700) base subcomplex of the 26S proteasome. The 26S proteasome is composed of a core protease (CP), known as the 20S proteasome, capped at one or both ends by the 19S regulatory particle (RP/PA700). The RP/PA700 complex is composed of at least 17 different subunits in two subcomplexes, the base and the lid, which form the portions proximal and distal to the 20S proteolytic core, respectively.

It is found in the cytoplasm. Its subcellular location is the nucleus. The 26S proteasome is involved in the ATP-dependent degradation of ubiquitinated proteins. The regulatory (or ATPase) complex confers ATP dependency and substrate specificity to the 26S complex. This is 26S proteasome regulatory subunit 7 homolog B (RPT1B) from Arabidopsis thaliana (Mouse-ear cress).